Consider the following 94-residue polypeptide: Integration host factor subunit beta (94 aa).

It belongs to the bacterial histone-like protein family. Heterodimer of an alpha and a beta chain.

In terms of biological role, this protein is one of the two subunits of integration host factor, a specific DNA-binding protein that functions in genetic recombination as well as in transcriptional and translational control. This is Integration host factor subunit beta from Mannheimia succiniciproducens (strain KCTC 0769BP / MBEL55E).